The chain runs to 135 residues: UPF0201 protein TON_1346 (135 aa).

Belongs to the UPF0201 family.

The protein is UPF0201 protein TON_1346 of Thermococcus onnurineus (strain NA1).